Consider the following 269-residue polypeptide: Regulatory protein RecX (269 aa).

The protein belongs to the RecX family.

Its subcellular location is the cytoplasm. Its function is as follows. Modulates RecA activity. The protein is Regulatory protein RecX of Lactococcus lactis subsp. cremoris (strain MG1363).